The sequence spans 181 residues: Large ribosomal subunit protein uL16 (181 aa).

It belongs to the universal ribosomal protein uL16 family. In terms of assembly, part of the 50S ribosomal subunit.

This chain is Large ribosomal subunit protein uL16, found in Pyrococcus furiosus (strain ATCC 43587 / DSM 3638 / JCM 8422 / Vc1).